We begin with the raw amino-acid sequence, 474 residues long: tRNA-2-methylthio-N(6)-dimethylallyladenosine synthase (474 aa).

The MTTase N-terminal domain occupies 3-120 (QKLHIKTWGC…LPEMINQIRG (118 aa)). Cys-12, Cys-49, Cys-83, Cys-157, Cys-161, and Cys-164 together coordinate [4Fe-4S] cluster. The 233-residue stretch at 143–375 (RAEGPTAFVS…QQRINNQAAQ (233 aa)) folds into the Radical SAM core domain. The region spanning 378-441 (RAMLGTEQRV…TNSLRGEVVR (64 aa)) is the TRAM domain.

Belongs to the methylthiotransferase family. MiaB subfamily. As to quaternary structure, monomer. The cofactor is [4Fe-4S] cluster.

It localises to the cytoplasm. The catalysed reaction is N(6)-dimethylallyladenosine(37) in tRNA + (sulfur carrier)-SH + AH2 + 2 S-adenosyl-L-methionine = 2-methylsulfanyl-N(6)-dimethylallyladenosine(37) in tRNA + (sulfur carrier)-H + 5'-deoxyadenosine + L-methionine + A + S-adenosyl-L-homocysteine + 2 H(+). Functionally, catalyzes the methylthiolation of N6-(dimethylallyl)adenosine (i(6)A), leading to the formation of 2-methylthio-N6-(dimethylallyl)adenosine (ms(2)i(6)A) at position 37 in tRNAs that read codons beginning with uridine. This is tRNA-2-methylthio-N(6)-dimethylallyladenosine synthase from Pasteurella multocida (strain Pm70).